We begin with the raw amino-acid sequence, 62 residues long: Venom peptide SjAPI-2 (62 aa).

Disulfide bonds link Cys-4-Cys-40, Cys-14-Cys-36, Cys-18-Cys-32, Cys-22-Cys-60, and Cys-42-Cys-54. Residues 4 to 60 enclose the TIL domain; the sequence is CRISGEVFTWCGTTCPLTCENFRNPPKHCPQGCFVGCMCRRGLVRHRNGRCVRPPRC.

This sequence belongs to the serine protease inhibitor-like (TIL domain-containing) family. Expressed by the venom gland.

Its subcellular location is the secreted. Functionally, serine protease inhibitor. The sequence is that of Venom peptide SjAPI-2 from Scorpiops jendeki (Scorpion).